The primary structure comprises 805 residues: Leucine--tRNA ligase (805 aa).

Positions 40–51 match the 'HIGH' region motif; that stretch reads PYPSGSGLHVGH. The short motif at 576-580 is the 'KMSKS' region element; the sequence is KMSKS. K579 contacts ATP.

The protein belongs to the class-I aminoacyl-tRNA synthetase family.

The protein resides in the cytoplasm. The enzyme catalyses tRNA(Leu) + L-leucine + ATP = L-leucyl-tRNA(Leu) + AMP + diphosphate. This is Leucine--tRNA ligase from Chlorobium luteolum (strain DSM 273 / BCRC 81028 / 2530) (Pelodictyon luteolum).